Here is a 219-residue protein sequence, read N- to C-terminus: MAFLLHQARFYTTVNHLRDLPPTVQPEIAFAGRSNAGKSTAINVLCNQKRLAFASKTPGRTQHINYFSVGPAAEPVANLVDLPGYGYAEVPGAAKAHWEMLLSSYLATRSQLCGLILMMDSRRPLTDLDRRMIEWFAPTGKPIHTLLTKCDKLTRQESINALRNTQKGLDAYRDQGVKGKLTVQLFSALKRTGLDEAHELIESWLRPSVADAEGAPVAQ.

The EngB-type G domain maps to 24 to 207 (VQPEIAFAGR…HELIESWLRP (184 aa)). GTP is bound by residues 32–39 (GRSNAGKS), 59–63 (GRTQH), 81–84 (DLPG), 148–151 (TKCD), and 186–188 (FSA). Positions 39 and 61 each coordinate Mg(2+).

This sequence belongs to the TRAFAC class TrmE-Era-EngA-EngB-Septin-like GTPase superfamily. EngB GTPase family. It depends on Mg(2+) as a cofactor.

Necessary for normal cell division and for the maintenance of normal septation. This is Probable GTP-binding protein EngB from Burkholderia vietnamiensis (strain G4 / LMG 22486) (Burkholderia cepacia (strain R1808)).